The sequence spans 397 residues: Metallophosphoesterase 1 (397 aa).

A helical membrane pass occupies residues 27–47 (IAVVFAVLLFCEFLIYYLAIF). 6 residues coordinate a divalent metal cation: Asp-77, Asp-119, Asn-157, His-250, His-304, and His-306. Residues 357-377 (VVLIIYCGMVGFLVVLTLTHF) traverse the membrane as a helical segment. A Di-lysine motif motif is present at residues 393–397 (KRKTR).

This sequence belongs to the metallophosphoesterase superfamily. MPPE1 family. Interacts with GPI-anchor proteins (via the GPI portion). Interacts with TMED10. Requires Mn(2+) as cofactor.

It is found in the endoplasmic reticulum-Golgi intermediate compartment membrane. Metallophosphoesterase that catalyzes the removal of a side-chain ethanolamine-phosphate (EtNP) from the second mannose of the GPI-anchor protein intermediate. Participates in the glycan remodeling steps of GPI-anchor maturation to allow an efficient transport of GPI-anchor proteins from the endoplasmic reticulum to the Golgi. This is Metallophosphoesterase 1 from Pongo abelii (Sumatran orangutan).